The primary structure comprises 74 residues: uncharacterized protein (74 aa).

The next 2 helical transmembrane spans lie at 3–23 (YSALIPLFILLISLVLFCFSF) and 35–55 (ILFFAYCIDFLALILAVMLLT).

It is found in the cell membrane. This is an uncharacterized protein from Mycoplasma genitalium (strain ATCC 33530 / DSM 19775 / NCTC 10195 / G37) (Mycoplasmoides genitalium).